The chain runs to 496 residues: WD repeat-containing protein 37 (496 aa).

2 stretches are compositionally biased toward polar residues: residues 1 to 13 and 22 to 31; these read MPTESGSCSTARQ and SLSIRRTNSS. The interval 1–50 is disordered; that stretch reads MPTESGSCSTARQAKQKRKSHSLSIRRTNSSEQERTGLPREMLEGQDSKL. Basic and acidic residues predominate over residues 32–47; the sequence is EQERTGLPREMLEGQD. WD repeat units lie at residues 154-194 and 197-236; these read GHRD…CLVK and GHVGSVNSIKFHPSEQLALTASGDQTAHIWRYVVQLPTPQ. Residues 238-267 are disordered; it reads VADTSQQISGEDEIECSDKDEPDIDGDVSS. Over residues 247–265 the composition is skewed to acidic residues; sequence GEDEIECSDKDEPDIDGDV. 5 WD repeats span residues 281–320, 323–362, 367–405, 408–447, and 454–495; these read SHQGVVIAADWLVGGKQVVTASWDRTANLYDVETSELVHS, GHDQELTHCCTHPTQRLVVTSSRDTTFRLWDFRDPSIHSV, GHTDTVTSAVFTVGDNVVSGSDDRTVKVWDLKNMRSPIA, RTDSAINRINVCVGQKIIALPHDNRQVRLFDMSGVRLARL, and GHRR…LLQE.

As to quaternary structure, forms homodimers. Interacts with PACS1. Interacts with PACS2.

The protein resides in the cytoplasm. It is found in the nucleus. Its function is as follows. Required for normal ER Ca2+ handling in lymphocytes. Together with PACS1, it plays an essential role in stabilizing peripheral lymphocyte populations. The sequence is that of WD repeat-containing protein 37 (Wdr37) from Mus musculus (Mouse).